We begin with the raw amino-acid sequence, 464 residues long: Citrate synthase 5, mitochondrial (464 aa).

Residues 1–25 (MVFFRSVSAISRLRSRAVQQSSLSN) constitute a mitochondrion transit peptide. Catalysis depends on residues His-300, His-346, and Asp-401.

It belongs to the citrate synthase family.

The protein localises to the mitochondrion matrix. The catalysed reaction is oxaloacetate + acetyl-CoA + H2O = citrate + CoA + H(+). It participates in carbohydrate metabolism; tricarboxylic acid cycle; isocitrate from oxaloacetate: step 1/2. The sequence is that of Citrate synthase 5, mitochondrial (CSY5) from Arabidopsis thaliana (Mouse-ear cress).